The sequence spans 331 residues: Bifunctional nuclease 1 (331 aa).

One can recognise a BFN domain in the interval 126–261; the sequence is CVQNNPRVLR…RIAYNNGLKV (136 aa). Positions 291–326 constitute a UVR domain; that stretch reads EAQEFDLVRNMLVAAVEERYKDAAQYRDQLFMFRAK.

It belongs to the bifunctional nuclease family.

The protein localises to the nucleus. Its function is as follows. Bifunctional nuclease with both RNase and DNase activities. Involved in basal defense response. Participates in abscisic acid-derived callose deposition following infection by a necrotrophic pathogen. The chain is Bifunctional nuclease 1 (BBD1) from Oryza sativa subsp. japonica (Rice).